A 341-amino-acid chain; its full sequence is ATP-dependent 6-phosphofructokinase 2 (341 aa).

ATP-binding positions include G10, 72 to 73 (RL), and 102 to 105 (GEGT). E103 lines the Mg(2+) pocket. Residues 125–127 (TID), R162, 169–171 (MGR), E222, K266, and 272–275 (HVQR) each bind substrate. The active-site Proton acceptor is the D127.

It belongs to the phosphofructokinase type A (PFKA) family. Mixed-substrate PFK group III subfamily. Homodimer or homotetramer. It depends on Mg(2+) as a cofactor.

The protein localises to the cytoplasm. The catalysed reaction is beta-D-fructose 6-phosphate + ATP = beta-D-fructose 1,6-bisphosphate + ADP + H(+). It functions in the pathway carbohydrate degradation; glycolysis; D-glyceraldehyde 3-phosphate and glycerone phosphate from D-glucose: step 3/4. Allosterically inhibited by phosphoenolpyruvate. Its function is as follows. Catalyzes the phosphorylation of D-fructose 6-phosphate to fructose 1,6-bisphosphate by ATP, the first committing step of glycolysis. In Streptomyces coelicolor (strain ATCC BAA-471 / A3(2) / M145), this protein is ATP-dependent 6-phosphofructokinase 2.